A 477-amino-acid chain; its full sequence is Maternal protein exuperantia-2 (477 aa).

The segment covering 196 to 209 (KDGNSTKEDEHENP) has biased composition (basic and acidic residues). Disordered stretches follow at residues 196 to 226 (KDGNSTKEDEHENPEGNSSITDNSGHKNQKQ) and 384 to 477 (TIKP…FADI). Residues 385 to 402 (IKPRCKRSGNGTRRRNRA) are compositionally biased toward basic residues.

In terms of biological role, ensures the proper localization of the mRNA of the bicoid gene to the anterior regions of the oocyte thus playing a fundamental role in the establishment of the polarity of the oocyte. May bind the bcd mRNA. This Drosophila pseudoobscura pseudoobscura (Fruit fly) protein is Maternal protein exuperantia-2 (exu2).